The sequence spans 226 residues: ATP synthase F(0) complex subunit a (226 aa).

Transmembrane regions (helical) follow at residues 6–26, 68–88, 97–117, 138–158, 164–184, and 193–213; these read FAPF…IMIF, WTLM…LGLL, QLSM…LMGF, IPML…ALAV, ITAG…LSSI, and FTIL…QAYV.

The protein belongs to the ATPase A chain family. Component of the ATP synthase complex composed at least of ATP5F1A/subunit alpha, ATP5F1B/subunit beta, ATP5MC1/subunit c (homooctomer), MT-ATP6/subunit a, MT-ATP8/subunit 8, ATP5ME/subunit e, ATP5MF/subunit f, ATP5MG/subunit g, ATP5MK/subunit k, ATP5MJ/subunit j, ATP5F1C/subunit gamma, ATP5F1D/subunit delta, ATP5F1E/subunit epsilon, ATP5PF/subunit F6, ATP5PB/subunit b, ATP5PD/subunit d, ATP5PO/subunit OSCP. ATP synthase complex consists of a soluble F(1) head domain (subunits alpha(3) and beta(3)) - the catalytic core - and a membrane F(0) domain - the membrane proton channel (subunits c, a, 8, e, f, g, k and j). These two domains are linked by a central stalk (subunits gamma, delta, and epsilon) rotating inside the F1 region and a stationary peripheral stalk (subunits F6, b, d, and OSCP). Interacts with DNAJC30; interaction is direct.

It is found in the mitochondrion inner membrane. It catalyses the reaction H(+)(in) = H(+)(out). Its function is as follows. Subunit a, of the mitochondrial membrane ATP synthase complex (F(1)F(0) ATP synthase or Complex V) that produces ATP from ADP in the presence of a proton gradient across the membrane which is generated by electron transport complexes of the respiratory chain. ATP synthase complex consist of a soluble F(1) head domain - the catalytic core - and a membrane F(1) domain - the membrane proton channel. These two domains are linked by a central stalk rotating inside the F(1) region and a stationary peripheral stalk. During catalysis, ATP synthesis in the catalytic domain of F(1) is coupled via a rotary mechanism of the central stalk subunits to proton translocation. With the subunit c (ATP5MC1), forms the proton-conducting channel in the F(0) domain, that contains two crucial half-channels (inlet and outlet) that facilitate proton movement from the mitochondrial intermembrane space (IMS) into the matrix. Protons are taken up via the inlet half-channel and released through the outlet half-channel, following a Grotthuss mechanism. This chain is ATP synthase F(0) complex subunit a, found in Ornithorhynchus anatinus (Duckbill platypus).